Consider the following 130-residue polypeptide: Protein ApaG (130 aa).

The region spanning 3–127 is the ApaG domain; that stretch reads KAETRGISVI…FSLDVPHMRR (125 aa).

This Methylobacterium nodulans (strain LMG 21967 / CNCM I-2342 / ORS 2060) protein is Protein ApaG.